The following is a 52-amino-acid chain: Insulin-2 (52 aa).

3 cysteine pairs are disulfide-bonded: C7–C38, C19–C51, and C37–C42.

It belongs to the insulin family. As to quaternary structure, heterodimer of a B chain and an A chain linked by two disulfide bonds.

The protein resides in the secreted. Functionally, insulin decreases blood glucose concentration. It increases cell permeability to monosaccharides, amino acids and fatty acids. It accelerates glycolysis, the pentose phosphate cycle, and glycogen synthesis in liver. This Huso dauricus (Kaluga sturgeon) protein is Insulin-2.